The chain runs to 671 residues: DNA ligase (671 aa).

NAD(+)-binding positions include 32 to 36, 81 to 82, and E113; these read DAEYD and SL. The active-site N6-AMP-lysine intermediate is the K115. Residues R136, E173, K290, and K314 each contribute to the NAD(+) site. The Zn(2+) site is built by C408, C411, C426, and C432. The region spanning 593–671 is the BRCT domain; the sequence is EIDSPFAGKT…EAEMLRLLGS (79 aa).

It belongs to the NAD-dependent DNA ligase family. LigA subfamily. Mg(2+) serves as cofactor. The cofactor is Mn(2+).

The catalysed reaction is NAD(+) + (deoxyribonucleotide)n-3'-hydroxyl + 5'-phospho-(deoxyribonucleotide)m = (deoxyribonucleotide)n+m + AMP + beta-nicotinamide D-nucleotide.. Its function is as follows. DNA ligase that catalyzes the formation of phosphodiester linkages between 5'-phosphoryl and 3'-hydroxyl groups in double-stranded DNA using NAD as a coenzyme and as the energy source for the reaction. It is essential for DNA replication and repair of damaged DNA. The sequence is that of DNA ligase from Escherichia coli O7:K1 (strain IAI39 / ExPEC).